The sequence spans 269 residues: Protein TORNADO 2 (269 aa).

At 1-10 (MPLSNNVIGC) the chain is on the cytoplasmic side. The helical transmembrane segment at 11–31 (INFITVLLSIPVIGAGIWLAI) threads the bilayer. Topologically, residues 32-44 (GTVNSCVKLLQWP) are extracellular. Residues 45-65 (VIILGVLILLVGLAGFIGGFW) form a helical membrane-spanning segment. The Cytoplasmic segment spans residues 66-71 (RITWLL). Residues 72–92 (VVYLIAMLILIVLLGCLVGFI) traverse the membrane as a helical segment. Over 93–231 (YMVTIRGSGH…NIKVDWLKAD (139 aa)) the chain is Extracellular. N200 carries N-linked (GlcNAc...) asparagine glycosylation. Residues 232-252 (IFLLLALIGLIIVYIIGCCAF) traverse the membrane as a helical segment. The Cytoplasmic segment spans residues 253–269 (RNAETEDIFRKYKQGYT).

Belongs to the tetraspanin (TM4SF) family. As to expression, expressed in seedlings, roots, leaves, stems, apex, siliques and flowers. Present in ovules, prominently in nucellus and integuments.

Its subcellular location is the membrane. Its function is as follows. Involved in the basipetal transport of auxin (IAA) that modulates growth and organs organization, as well as cell differentiation. Regulates shoot apical meristem (SAM) organization in the peripheral zone. Required for initial meristematic divisions in the epidermal/lateral root cap leading to the formation of epidermal cells and a clone of lateral root cap cells, as well as for the maintenance of the radial pattern of cell specification in the root, thus regulating the distinction between the lateral root cap and epidermis. Together with WIH peptides, promotes megasporogenesis. The protein is Protein TORNADO 2 (TRN2) of Arabidopsis thaliana (Mouse-ear cress).